A 325-amino-acid polypeptide reads, in one-letter code: Aminotransferase tasG (325 aa).

Gly-35 is a binding site for substrate. Pyridoxal 5'-phosphate-binding positions include 89-90, Asn-143, Tyr-174, and 203-205; these read TW and SFA. Residue Asn-143 coordinates substrate. Residue Lys-206 is modified to N6-(pyridoxal phosphate)lysine. Arg-214 contributes to the pyridoxal 5'-phosphate binding site.

Belongs to the class-I pyridoxal-phosphate-dependent aminotransferase family. In terms of assembly, homodimer. It depends on pyridoxal 5'-phosphate as a cofactor.

It functions in the pathway secondary metabolite biosynthesis. Functionally, aminotransferase; part of the gene cluster that mediates the biosynthesis of the tetramic acids Sch210971 and Sch210972, potential anti-HIV fungal natural product that contain a decalin core. The PKS module of tasS together with the enoylreductase tasC catalyze the formation of the polyketide unit which is then conjugated to 4-hydroxyl-4-methyl glutamate (HMG) by the condensation domain of the tasS NRPS module. One unique structural feature of Sch210971 and Sch210972 is the tetramic acid motif proposed to be derived from the non-proteinogenic amino acid HMG, by a Dieckmann-type condensation catalyzed by the reductase domain of tasS. The aldolase tasA catalyzes the aldol condensation of 2 molecules of pyruvic acid to yield the intermediate 4-hydroxyl-4-methyl-2-oxoglutarate (HMOG), which can then be stereoselectively transaminated, may be by tasG, to form HMG. The Diels-Alderase tas3 then uses the Dieckmann product of tasS as substrate and catalyzes the Diels-Alder cycloaddition to form the decalin ring of Sch210971 and Sch210972. This Hapsidospora irregularis protein is Aminotransferase tasG.